A 417-amino-acid chain; its full sequence is FK506-binding protein 3 (417 aa).

2 disordered regions span residues 42–129 and 191–307; these read SLDD…LSPE and EGCG…DKPK. Acidic residues-rich tracts occupy residues 61 to 84, 99 to 120, and 197 to 222; these read FDDEDDLLADSEEEEEEESEEESE, SEEEDSEEEDSEGEDSDDEFEE, and CACDDDSDYDLTPDEEDILDMEDASD. Composition is skewed to basic and acidic residues over residues 236-249 and 256-307; these read ANEKRKADEDEPKA and DQKD…DKPK. The 87-residue stretch at 331–417 folds into the PPIase FKBP-type domain; that stretch reads GARVGMRYIG…TFDVKLVSLK (87 aa).

This sequence belongs to the FKBP-type PPIase family. FKBP3/4 subfamily.

The protein localises to the nucleus. It is found in the nucleolus. The catalysed reaction is [protein]-peptidylproline (omega=180) = [protein]-peptidylproline (omega=0). Its activity is regulated as follows. Inhibited by both FK506 and rapamycin. Its function is as follows. PPIases accelerate the folding of proteins. It catalyzes the cis-trans isomerization of proline imidic peptide bonds in oligopeptides. The protein is FK506-binding protein 3 (FPR3) of Eremothecium gossypii (strain ATCC 10895 / CBS 109.51 / FGSC 9923 / NRRL Y-1056) (Yeast).